A 503-amino-acid polypeptide reads, in one-letter code: ATP synthase subunit beta (503 aa).

Residue 157–164 participates in ATP binding; it reads GGAGVGKT.

The protein belongs to the ATPase alpha/beta chains family. As to quaternary structure, F-type ATPases have 2 components, CF(1) - the catalytic core - and CF(0) - the membrane proton channel. CF(1) has five subunits: alpha(3), beta(3), gamma(1), delta(1), epsilon(1). CF(0) has three main subunits: a(1), b(2) and c(9-12). The alpha and beta chains form an alternating ring which encloses part of the gamma chain. CF(1) is attached to CF(0) by a central stalk formed by the gamma and epsilon chains, while a peripheral stalk is formed by the delta and b chains.

The protein resides in the cell inner membrane. The catalysed reaction is ATP + H2O + 4 H(+)(in) = ADP + phosphate + 5 H(+)(out). In terms of biological role, produces ATP from ADP in the presence of a proton gradient across the membrane. The catalytic sites are hosted primarily by the beta subunits. This is ATP synthase subunit beta from Flavobacterium johnsoniae (strain ATCC 17061 / DSM 2064 / JCM 8514 / BCRC 14874 / CCUG 350202 / NBRC 14942 / NCIMB 11054 / UW101) (Cytophaga johnsonae).